The chain runs to 303 residues: GTP cyclohydrolase FolE2 (303 aa).

It belongs to the GTP cyclohydrolase IV family.

The enzyme catalyses GTP + H2O = 7,8-dihydroneopterin 3'-triphosphate + formate + H(+). Its pathway is cofactor biosynthesis; 7,8-dihydroneopterin triphosphate biosynthesis; 7,8-dihydroneopterin triphosphate from GTP: step 1/1. In terms of biological role, converts GTP to 7,8-dihydroneopterin triphosphate. The protein is GTP cyclohydrolase FolE2 of Exiguobacterium sp. (strain ATCC BAA-1283 / AT1b).